A 431-amino-acid chain; its full sequence is Enolase (431 aa).

Gln-167 serves as a coordination point for (2R)-2-phosphoglycerate. Catalysis depends on Glu-209, which acts as the Proton donor. Asp-246, Glu-289, and Asp-316 together coordinate Mg(2+). Positions 341, 370, 371, and 392 each coordinate (2R)-2-phosphoglycerate. Lys-341 serves as the catalytic Proton acceptor.

It belongs to the enolase family. In terms of assembly, component of the RNA degradosome, a multiprotein complex involved in RNA processing and mRNA degradation. The cofactor is Mg(2+).

Its subcellular location is the cytoplasm. It is found in the secreted. The protein localises to the cell surface. The enzyme catalyses (2R)-2-phosphoglycerate = phosphoenolpyruvate + H2O. It functions in the pathway carbohydrate degradation; glycolysis; pyruvate from D-glyceraldehyde 3-phosphate: step 4/5. Its function is as follows. Catalyzes the reversible conversion of 2-phosphoglycerate (2-PG) into phosphoenolpyruvate (PEP). It is essential for the degradation of carbohydrates via glycolysis. The polypeptide is Enolase (Shewanella denitrificans (strain OS217 / ATCC BAA-1090 / DSM 15013)).